A 298-amino-acid chain; its full sequence is Syntaxin-4 (298 aa).

The Cytoplasmic portion of the chain corresponds to 1–274 (MRDRTHELRQ…NQKKARKKKV (274 aa)). Phosphoserine is present on residues S15, S29, S36, S117, S208, and S248. The stretch at 38 to 163 (DDEFFQKVQT…ERIRRQLKIT (126 aa)) forms a coiled coil. The interval 154–298 (ERIRRQLKIT…VIIGITITVG (145 aa)) is interaction with CENPF. Residues 200-262 (LNEISARHSE…ERGQEHVKIA (63 aa)) form the t-SNARE coiled-coil homology domain. Residues 275–295 (MIAICVSVTVLILAVIIGITI) form a helical; Anchor for type IV membrane protein membrane-spanning segment. At 296–298 (TVG) the chain is on the extracellular side.

It belongs to the syntaxin family. As to quaternary structure, interacts with STXBP6. Component of the SNARE complex composed of STX4, SNAP23 and VAMP7 that interacts with SYT7 during lysosomal exocytosis. Found in a complex with VAMP8 and SNAP23. Detected in a complex with SNAP23 and STXBP4. Interacts with VAMP2. Interacts with SNAP23 and SNAPIN. Interacts with LLGL1. Interacts (via C-terminus) with CENPF. Interacts with DOC2B. Interacts with STXBP3; excludes interaction with DOC2B and SNAP25. Interacts with STXBP4; excludes interaction with VAMP2. Interacts with STXBP5L. As to expression, expressed in the outer and inner hair cells of the cochlea.

The protein resides in the cell membrane. It localises to the cell projection. The protein localises to the neuron projection. Its subcellular location is the stereocilium. In terms of biological role, plasma membrane t-SNARE that mediates docking of transport vesicles. Necessary for the translocation of SLC2A4 from intracellular vesicles to the plasma membrane. In neurons, recruited at neurite tips to membrane domains rich in the phospholipid 1-oleoyl-2-palmitoyl-PC (OPPC) which promotes neurite tip surface expression of the dopamine transporter SLC6A3/DAT by facilitating fusion of SLC6A3-containing transport vesicles with the plasma membrane. Together with STXB3 and VAMP2, may also play a role in docking/fusion of intracellular GLUT4-containing vesicles with the cell surface in adipocytes and in docking of synaptic vesicles at presynaptic active zones. Required for normal hearing. This chain is Syntaxin-4 (Stx4), found in Mus musculus (Mouse).